Reading from the N-terminus, the 449-residue chain is Glucose-6-phosphate isomerase (449 aa).

The active-site Proton donor is glutamate 291. Residues histidine 312 and lysine 426 contribute to the active site.

This sequence belongs to the GPI family.

The protein localises to the cytoplasm. It catalyses the reaction alpha-D-glucose 6-phosphate = beta-D-fructose 6-phosphate. It participates in carbohydrate biosynthesis; gluconeogenesis. Its pathway is carbohydrate degradation; glycolysis; D-glyceraldehyde 3-phosphate and glycerone phosphate from D-glucose: step 2/4. Catalyzes the reversible isomerization of glucose-6-phosphate to fructose-6-phosphate. The sequence is that of Glucose-6-phosphate isomerase from Streptococcus equi subsp. zooepidemicus (strain MGCS10565).